A 483-amino-acid polypeptide reads, in one-letter code: Bifunctional protein HldE (483 aa).

Residues Met1 to Pro327 form a ribokinase region. Asn201 to Glu204 lines the ATP pocket. Asp272 is a catalytic residue. The interval Phe354–Ser483 is cytidylyltransferase.

It in the N-terminal section; belongs to the carbohydrate kinase PfkB family. In the C-terminal section; belongs to the cytidylyltransferase family. As to quaternary structure, homodimer.

It carries out the reaction D-glycero-beta-D-manno-heptose 7-phosphate + ATP = D-glycero-beta-D-manno-heptose 1,7-bisphosphate + ADP + H(+). It catalyses the reaction D-glycero-beta-D-manno-heptose 1-phosphate + ATP + H(+) = ADP-D-glycero-beta-D-manno-heptose + diphosphate. Its pathway is nucleotide-sugar biosynthesis; ADP-L-glycero-beta-D-manno-heptose biosynthesis; ADP-L-glycero-beta-D-manno-heptose from D-glycero-beta-D-manno-heptose 7-phosphate: step 1/4. It functions in the pathway nucleotide-sugar biosynthesis; ADP-L-glycero-beta-D-manno-heptose biosynthesis; ADP-L-glycero-beta-D-manno-heptose from D-glycero-beta-D-manno-heptose 7-phosphate: step 3/4. Its function is as follows. Catalyzes the phosphorylation of D-glycero-D-manno-heptose 7-phosphate at the C-1 position to selectively form D-glycero-beta-D-manno-heptose-1,7-bisphosphate. Catalyzes the ADP transfer from ATP to D-glycero-beta-D-manno-heptose 1-phosphate, yielding ADP-D-glycero-beta-D-manno-heptose. This chain is Bifunctional protein HldE, found in Caulobacter vibrioides (strain ATCC 19089 / CIP 103742 / CB 15) (Caulobacter crescentus).